Reading from the N-terminus, the 1937-residue chain is Myosin-8 (1937 aa).

A Myosin N-terminal SH3-like domain is found at 35–84 (DAKTSVFVAEPKESYVKSVIQSKDGGKVTVKTESGATLTVKEDQVFPMNP). Residues Thr-66 and Thr-71 each carry the phosphothreonine modification. Residues 88 to 781 (DKIEDMAMMT…LLGLLEEMRD (694 aa)) enclose the Myosin motor domain. Lys-132 carries the N6,N6,N6-trimethyllysine modification. An ATP-binding site is contributed by 181–188 (GESGAGKT). A Phosphotyrosine modification is found at Tyr-389. Position 419 is a phosphothreonine (Thr-419). Tyr-424 carries the post-translational modification Phosphotyrosine. The residue at position 625 (Ser-625) is a Phosphoserine. The tract at residues 658–680 (LNKLMTNLRSTHPHFVRCIIPNE) is actin-binding. His-756 carries the pros-methylhistidine modification. The actin-binding stretch occupies residues 760 to 774 (KFGHTKVFFKAGLLG). The 33-residue stretch at 781-813 (DEKLAQIITRTQAVCRGYLMRVEYQKMLLRRES) folds into the IQ domain. The stretch at 842-1937 (LLKSAETEKE…REVHTKISAE (1096 aa)) forms a coiled coil. Ser-1091 and Ser-1095 each carry phosphoserine. Positions 1125–1171 (IEAERASRAKAEKQRSDLSRELEEISERLEEAGGATSAQVEMNKKRE) are disordered. A compositionally biased stretch (basic and acidic residues) spans 1127–1155 (AERASRAKAEKQRSDLSRELEEISERLEE). Phosphoserine occurs at positions 1161 and 1236. Phosphothreonine is present on Thr-1254. Ser-1260 carries the phosphoserine modification. Residue Thr-1285 is modified to Phosphothreonine. A phosphoserine mark is found at Ser-1291, Ser-1302, and Ser-1305. Tyr-1463 bears the Phosphotyrosine mark. A Phosphothreonine modification is found at Thr-1466. Residue Tyr-1491 is modified to Phosphotyrosine. Ser-1494 bears the Phosphoserine mark. Residue Thr-1500 is modified to Phosphothreonine. Ser-1513 carries the phosphoserine modification. Thr-1516 is subject to Phosphothreonine. Residues Ser-1553, Ser-1573, Ser-1602, Ser-1713, and Ser-1725 each carry the phosphoserine modification. At Thr-1729 the chain carries Phosphothreonine. Phosphoserine is present on Ser-1738.

The protein belongs to the TRAFAC class myosin-kinesin ATPase superfamily. Myosin family. As to quaternary structure, muscle myosin is a hexameric protein that consists of 2 heavy chain subunits (MHC), 2 alkali light chain subunits (MLC) and 2 regulatory light chain subunits (MLC-2).

The protein resides in the cytoplasm. Its subcellular location is the myofibril. In terms of biological role, muscle contraction. This Mus musculus (Mouse) protein is Myosin-8 (Myh8).